Consider the following 507-residue polypeptide: Tryptamine 4-monooxygenase (507 aa).

Positions 1–19 (MIVLLVSLVLAGCIYYANA) are cleaved as a signal peptide. Positions 403 to 425 (PNPSEFRPERYLSSDGKPDPTVR) are disordered. Positions 408–425 (FRPERYLSSDGKPDPTVR) are enriched in basic and acidic residues. Heme is bound at residue C439.

This sequence belongs to the cytochrome P450 family. It depends on heme as a cofactor.

The enzyme catalyses tryptamine + AH2 + O2 = 4-hydroxytryptamine + A + H2O. The protein operates within secondary metabolite biosynthesis. In terms of biological role, tryptamine 4-monooxygenase; part of the gene cluster that mediates the biosynthesis of psilocybin, a psychotropic tryptamine-derived natural product. The first step in the pathway is the decarboxylation of L-tryptophan to tryptamine by the decarboxylase psiD. PsiD does not decarboxylate phenylalanine, tyrosine, or 5-hydroxy- L -tryptophan (5-HTP). 4-hydroxy-L-tryptophan is accepted as substrate by psiD as well. The cytochrome P450 monooxygenase psiH then converts tryptamine to 4-hydroxytryptamine. The kinase psiK catalyzes the 4-O-phosphorylation step by converting 4-hydroxytryptamine into norbaeocystin. The methyltransferase psiM then catalyzes iterative methyl transfer to the amino group of norbaeocystin to yield psilocybin via a monomethylated intermediate, baeocystin. The protein is Tryptamine 4-monooxygenase of Psilocybe cyanescens.